A 546-amino-acid chain; its full sequence is Glutathione synthetase, chloroplastic (546 aa).

The N-terminal 63 residues, Met1 to Glu63, are a transit peptide targeting the chloroplast. Arg200 contacts substrate. Residue Glu216 participates in ATP binding. Mg(2+) contacts are provided by Glu216 and Asn218. Substrate contacts are provided by residues Ile220–Ser223, Glu288–Asn290, Gln294, and Arg342–Tyr345. Residues Lys381, Lys435–Asn444, Tyr446, Met471–Ile474, and Glu497 contribute to the ATP site. Glu439 contributes to the Mg(2+) binding site. Substrate is bound at residue Arg522. ATP is bound by residues Lys524 and Glu530. Val533–Ala534 is a substrate binding site.

Belongs to the eukaryotic GSH synthase family. Homodimer. Mg(2+) is required as a cofactor.

The protein localises to the plastid. The protein resides in the chloroplast. The catalysed reaction is gamma-L-glutamyl-L-cysteine + glycine + ATP = glutathione + ADP + phosphate + H(+). It functions in the pathway sulfur metabolism; glutathione biosynthesis; glutathione from L-cysteine and L-glutamate: step 2/2. This chain is Glutathione synthetase, chloroplastic (GSH2), found in Solanum lycopersicum (Tomato).